Here is a 2465-residue protein sequence, read N- to C-terminus: Protein DOP1A (2465 aa).

Disordered regions lie at residues 559–600 (PSGQ…SSES), 625–646 (GAAA…TVGS), and 705–733 (TEHQ…KEKN). Over residues 633 to 646 (STSSETETASTVGS) the composition is skewed to low complexity. A compositionally biased stretch (basic and acidic residues) spans 707–733 (HQGDLGREQGETSKWDRNSQGDVKEKN). Residue Ser-1266 is modified to Phosphoserine. Composition is skewed to basic and acidic residues over residues 1282–1291 (EKETIVKESG) and 1305–1315 (KKDDDKKKSSN). Positions 1282 to 1315 (EKETIVKESGKQPGAKPKVKLARKKDDDKKKSSN) are disordered.

It belongs to the DOP1 family.

It localises to the golgi apparatus membrane. May be involved in protein traffic between late Golgi and early endosomes. In Homo sapiens (Human), this protein is Protein DOP1A.